The primary structure comprises 128 residues: V-type proton ATPase subunit F (128 aa).

The protein belongs to the V-ATPase F subunit family. As to quaternary structure, V-ATPase is a heteromultimeric enzyme composed of a peripheral catalytic V1 complex (components A to H) attached to an integral membrane V0 proton pore complex (components: a, c, c'', d and e).

Its subcellular location is the vacuole membrane. Functionally, subunit of the peripheral V1 complex of vacuolar ATPase essential for assembly or catalytic function. V-ATPase is responsible for acidifying a variety of intracellular compartments in eukaryotic cells. This Arabidopsis thaliana (Mouse-ear cress) protein is V-type proton ATPase subunit F (VHA-F).